A 38-amino-acid chain; its full sequence is Photosystem I reaction center subunit IX (38 aa).

The helical transmembrane segment at 4 to 24 (FLTTAPVVAAIWFTATAGILI) threads the bilayer.

It belongs to the PsaJ family.

The protein localises to the cellular thylakoid membrane. In terms of biological role, may help in the organization of the PsaE and PsaF subunits. The protein is Photosystem I reaction center subunit IX of Synechococcus sp. (strain CC9902).